The sequence spans 327 residues: DNA-directed RNA polymerase subunit alpha (327 aa).

The segment at 1-231 (MIYQMQMPAK…DHVTFFANFS (231 aa)) is alpha N-terminal domain (alpha-NTD). The segment at 252–327 (MRRLFHTKIE…GMDITKYQMK (76 aa)) is alpha C-terminal domain (alpha-CTD).

This sequence belongs to the RNA polymerase alpha chain family. In terms of assembly, homodimer. The RNAP catalytic core consists of 2 alpha, 1 beta, 1 beta' and 1 omega subunit. When a sigma factor is associated with the core the holoenzyme is formed, which can initiate transcription.

The enzyme catalyses RNA(n) + a ribonucleoside 5'-triphosphate = RNA(n+1) + diphosphate. DNA-dependent RNA polymerase catalyzes the transcription of DNA into RNA using the four ribonucleoside triphosphates as substrates. The polypeptide is DNA-directed RNA polymerase subunit alpha (Pelodictyon phaeoclathratiforme (strain DSM 5477 / BU-1)).